The primary structure comprises 94 residues: Large ribosomal subunit protein bL25 (94 aa).

This sequence belongs to the bacterial ribosomal protein bL25 family. In terms of assembly, part of the 50S ribosomal subunit; part of the 5S rRNA/L5/L18/L25 subcomplex. Contacts the 5S rRNA. Binds to the 5S rRNA independently of L5 and L18.

Its function is as follows. This is one of the proteins that binds to the 5S RNA in the ribosome where it forms part of the central protuberance. The sequence is that of Large ribosomal subunit protein bL25 from Klebsiella pneumoniae subsp. pneumoniae (strain ATCC 700721 / MGH 78578).